The primary structure comprises 620 residues: Glutathione-regulated potassium-efflux system protein KefC (620 aa).

12 helical membrane-spanning segments follow: residues 4 to 24 (HTLIQALIYLGSAALIVPIAV), 26 to 46 (LGLGSVLGYLIAGCIIGPWGL), 54 to 74 (SILHFAEIGVVLMLFIIGLEL), 90 to 110 (GALQMVICGGLLGLFCMLLGL), 114 to 134 (VAELIGMTLALSSTAIAMQAM), 149 to 169 (FAVLLFQDIAAIPLVAMIPLL), 178 to 198 (MGAFVLSALKVAGALVLVVLL), 218 to 238 (VFSAVALFLVFGFGLLLEEVG), 270 to 290 (GLLLGLFFIGVGMSIDFGTLL), 294 to 314 (LRIVILLLGFLIIKIAMLWLI), 327 to 347 (WFAVLLGQGSEFAFVVFGAAQ), and 359 to 379 (SLTLAVALSMAATPILLVILN). Positions 399–518 (QPRVIIAGFG…AGVEKPERET (120 aa)) constitute an RCK N-terminal domain. A disordered region spans residues 597-620 (GWQGTEEGKHTGNMADEPETKPSS).

This sequence belongs to the monovalent cation:proton antiporter 2 (CPA2) transporter (TC 2.A.37) family. KefC subfamily. Homodimer. Interacts with the regulatory subunit KefF.

The protein localises to the cell inner membrane. In terms of biological role, pore-forming subunit of a potassium efflux system that confers protection against electrophiles. Catalyzes K(+)/H(+) antiport. The protein is Glutathione-regulated potassium-efflux system protein KefC of Escherichia coli O127:H6 (strain E2348/69 / EPEC).